We begin with the raw amino-acid sequence, 133 residues long: Transcription antitermination protein NusB (133 aa).

Belongs to the NusB family.

Involved in transcription antitermination. Required for transcription of ribosomal RNA (rRNA) genes. Binds specifically to the boxA antiterminator sequence of the ribosomal RNA (rrn) operons. In Clostridium novyi (strain NT), this protein is Transcription antitermination protein NusB.